We begin with the raw amino-acid sequence, 147 residues long: Small ribosomal subunit protein uS12 (147 aa).

It belongs to the universal ribosomal protein uS12 family. In terms of assembly, part of the 30S ribosomal subunit.

With S4 and S5 plays an important role in translational accuracy. Located at the interface of the 30S and 50S subunits. This is Small ribosomal subunit protein uS12 from Pyrococcus horikoshii (strain ATCC 700860 / DSM 12428 / JCM 9974 / NBRC 100139 / OT-3).